A 159-amino-acid polypeptide reads, in one-letter code: Transcription elongation factor GreA (159 aa).

Residues 44–75 (SENAEYDAAREQQSQTEARIADLENKLSTATI) adopt a coiled-coil conformation.

It belongs to the GreA/GreB family.

Necessary for efficient RNA polymerase transcription elongation past template-encoded arresting sites. The arresting sites in DNA have the property of trapping a certain fraction of elongating RNA polymerases that pass through, resulting in locked ternary complexes. Cleavage of the nascent transcript by cleavage factors such as GreA or GreB allows the resumption of elongation from the new 3'terminus. GreA releases sequences of 2 to 3 nucleotides. This is Transcription elongation factor GreA from Chlorobium limicola (strain DSM 245 / NBRC 103803 / 6330).